Consider the following 898-residue polypeptide: Netrin receptor UNC5A (898 aa).

Positions 1–25 (MAVRPGLWPALLGIVLTAWLRGSGA) are cleaved as a signal peptide. At 26-361 (QQSATVANPV…TSSGPEDVAL (336 aa)) the chain is on the extracellular side. Residues 44 to 141 (PHFLVEPEDV…SGTTKSQKAY (98 aa)) form the Ig-like domain. 3 disulfide bridges follow: Cys-65-Cys-126, Cys-77-Cys-124, and Cys-170-Cys-221. N-linked (GlcNAc...) asparagine glycosylation is found at Asn-107 and Asn-218. Residues 155–234 (PLAKEVSLEQ…NIVARRRSAS (80 aa)) enclose the Ig-like C2-type domain. TSP type-1 domains are found at residues 242-296 (NGGW…TLCP) and 298-350 (DGSW…DLCL). C-linked (Man) tryptophan glycans are attached at residues Trp-245, Trp-248, and Trp-251. Disulfide bonds link Cys-254–Cys-291, Cys-258–Cys-295, and Cys-269–Cys-281. Trp-301 and Trp-304 each carry a C-linked (Man) tryptophan glycan. 3 disulfides stabilise this stretch: Cys-310–Cys-344, Cys-314–Cys-349, and Cys-322–Cys-334. Residue Asn-343 is glycosylated (N-linked (GlcNAc...) asparagine). The helical transmembrane segment at 362-382 (YIGLVAVAVCLILLLLVLVLI) threads the bilayer. At 383 to 898 (YCRKKEGLDS…GLFTVSEAEC (516 aa)) the chain is on the cytoplasmic side. The region spanning 497–640 (NMAYGTFNFL…LGRFALVGEA (144 aa)) is the ZU5 domain. The interaction with DCC stretch occupies residues 661–679 (SLEYNIRVYCLHDTHDALK). Residues 817–897 (QKIITSLDPP…AGLFTVSEAE (81 aa)) enclose the Death domain.

It belongs to the unc-5 family. As to quaternary structure, homodimer and homooligomer. Interacts with the cytoplasmic part of DCC. Interacts with MAGED1. Interacts with PRKCABP, possibly mediating some interaction with PKC. Interacts (via extracellular domain) with FLRT2 (via extracellular domain). Interacts (via extracellular domain) with FLRT3 (via extracellular domain). Phosphorylated on cytoplasmic tyrosine residues. Phosphorylated by PKC in vitro. Post-translationally, proteolytically cleaved by caspases during apoptosis. The cleavage does not take place when the receptor is associated with netrin ligand. Its cleavage by caspases is required to induce apoptosis. In terms of processing, the two extracellular TSRs of UNC5A contain WxxWxxWxxC motifs that can be C-mannosylated on all tryptophans. DPY19L1 preferentially mannosylates the first two tryptophans and DPY19L3 prefers the third. C-mannosylation by DPY19L1 is required for transport of UNC5A from the endoplasmic reticulum to the cell surface. In terms of tissue distribution, restricted to central nervous system.

Its subcellular location is the cell membrane. It is found in the membrane raft. It localises to the cell projection. The protein resides in the neuron projection. Functionally, receptor for netrin required for axon guidance. Functions in the netrin signaling pathway and promotes neurite outgrowth in response to NTN1. Mediates axon repulsion of neuronal growth cones in the developing nervous system in response to netrin. Axon repulsion in growth cones may be mediated by its association with DCC that may trigger signaling for repulsion. It also acts as a dependence receptor required for apoptosis induction when not associated with netrin ligand. The chain is Netrin receptor UNC5A (Unc5a) from Mus musculus (Mouse).